The following is a 189-amino-acid chain: Leucine repeat adapter protein 25 (189 aa).

Serine 28 bears the Phosphoserine mark. A disordered region spans residues 54–83 (ELSRAARAPDGPRHAAGAANAGPAAGPRRP). Residues 67–83 (HAAGAANAGPAAGPRRP) show a composition bias toward low complexity. The LRR repeat unit spans residues 86-114 (LDSALAALRKEMVGLRQLDMSLLCQLWGL). Residues 141–175 (DSSYPPDAGLSDDEEPPDASLPPDPPPLTVPQTHN) are disordered. Residues 159 to 169 (ASLPPDPPPLT) show a composition bias toward pro residues. At serine 188 the chain carries Phosphoserine.

It belongs to the FAM89 family. Interacts with SKI. Interacts (via LRR repeat) with CDC42BPA (via AGC-kinase C-terminal domain), CDC42BPB (via AGC-kinase C-terminal domain) and LIMK1 (via LIM zinc-binding domains). Forms a tripartite complex with CDC42BPA, CDC42BPB and LIMK1.

It is found in the cytoplasm. The protein localises to the cell projection. The protein resides in the lamellipodium. Its function is as follows. Negatively regulates TGF-beta-induced signaling; in cooperation with SKI prevents the translocation of SMAD2 from the nucleus to the cytoplasm in response to TGF-beta. Acts as an adapter that mediates the specific recognition of LIMK1 by CDC42BPA and CDC42BPB in the lamellipodia. LRAP25-mediated CDC42BPA/CDC42BPB targeting to LIMK1 and the lamellipodium results in LIMK1 activation and the subsequent phosphorylation of CFL1 which is important for lamellipodial F-actin regulation. This Homo sapiens (Human) protein is Leucine repeat adapter protein 25 (FAM89B).